Reading from the N-terminus, the 584-residue chain is Arginine--tRNA ligase (584 aa).

The short motif at 126–136 is the 'HIGH' region element; it reads PNIAKEMHVGH.

It belongs to the class-I aminoacyl-tRNA synthetase family. In terms of assembly, monomer.

The protein localises to the cytoplasm. The catalysed reaction is tRNA(Arg) + L-arginine + ATP = L-arginyl-tRNA(Arg) + AMP + diphosphate. The chain is Arginine--tRNA ligase (argS) from Synechocystis sp. (strain ATCC 27184 / PCC 6803 / Kazusa).